Reading from the N-terminus, the 476-residue chain is Rifampicin monooxygenase (476 aa).

Residues T12, E31, K32, Q98, L122, and T156 each coordinate FAD. The rifampicin site is built by R196 and R213. FAD-binding residues include D277, L290, and N291.

This sequence belongs to the rifampicin monooxygenase family. Requires FAD as cofactor.

The enzyme catalyses rifampicin + NADPH + O2 = rifampicin para-naphthoquinone carboxamide + NADP(+) + H2O + H(+). It carries out the reaction rifampicin + NADH + O2 = rifampicin para-naphthoquinone carboxamide + NAD(+) + H2O + H(+). The catalysed reaction is rifamycin SV + NADPH + O2 = rifamycin SV para-naphthoquinone carboxamide + NADP(+) + H2O. It catalyses the reaction rifamycin SV + NADH + O2 = rifamycin SV para-naphthoquinone carboxamide + NAD(+) + H2O. In terms of biological role, monooxygenase that can modify rifampicin, thereby inactivating its antibiotic activity. Inactivates a broad range of rifamycin antibiotics. This Streptomyces venezuelae (strain ATCC 10712 / CBS 650.69 / DSM 40230 / JCM 4526 / NBRC 13096 / PD 04745) protein is Rifampicin monooxygenase.